The following is a 94-amino-acid chain: Nucleoid-associated protein MYPE8070 (94 aa).

The protein belongs to the YbaB/EbfC family. In terms of assembly, homodimer.

Its subcellular location is the cytoplasm. It is found in the nucleoid. Its function is as follows. Binds to DNA and alters its conformation. May be involved in regulation of gene expression, nucleoid organization and DNA protection. This chain is Nucleoid-associated protein MYPE8070, found in Malacoplasma penetrans (strain HF-2) (Mycoplasma penetrans).